The chain runs to 391 residues: Ectodysplasin-A (391 aa).

The Cytoplasmic segment spans residues 1 to 41; sequence MGYPEVERRELLPAAAPRERGSQGCGCGGAPARAGEGNSCL. A helical; Signal-anchor for type II membrane protein transmembrane segment spans residues 42–62; the sequence is LFLGFFGLSLALHLLTLCCYL. The Extracellular portion of the chain corresponds to 63–391; sequence ELRSELRRER…AIRLGEAPAS (329 aa). Disordered regions lie at residues 73-127 and 146-245; these read GAES…HSDS and YSEE…GTRE. A compositionally biased stretch (low complexity) spans 86–101; it reads TSGTLSSLGGLDPDSP. Positions 102 to 113 are enriched in polar residues; that stretch reads ITSHLGQPSPKQ. The Collagen-like domain occupies 180 to 229; that stretch reads GPPGPNGPPGPPGPPGPQGPPGIPGIPGIPGTTVMGPPGPPGPPGPQGPP. Composition is skewed to pro residues over residues 181 to 203 and 216 to 228; these read PPGP…PGIP and PPGP…PQGP. In terms of domain architecture, THD spans 249–385; that stretch reads AVVHLQGQGS…HTTFFGAIRL (137 aa). An N-linked (GlcNAc...) asparagine glycan is attached at N313. A disulfide bridge links C332 with C346. N372 carries N-linked (GlcNAc...) asparagine glycosylation.

The protein belongs to the tumor necrosis factor family. As to quaternary structure, homotrimer. The homotrimers may then dimerize and form higher-order oligomers. Post-translationally, N-glycosylated. Processing by furin produces a secreted form. Not abundant; expressed in specific cell types of ectodermal (but not mesodermal) origin of keratinocytes, hair follicles, sweat glands. Also in adult heart, liver, muscle, pancreas, prostate, fetal liver, uterus, small intestine and umbilical cord.

It localises to the cell membrane. The protein localises to the secreted. Functionally, cytokine which is involved in epithelial-mesenchymal signaling during morphogenesis of ectodermal organs. Functions as a ligand activating the DEATH-domain containing receptors EDAR and EDA2R. May also play a role in cell adhesion. Its function is as follows. Binds only to the receptor EDAR, while isoform 3 binds exclusively to the receptor EDA2R. In terms of biological role, binds only to the receptor EDA2R. In Homo sapiens (Human), this protein is Ectodysplasin-A (EDA).